A 246-amino-acid polypeptide reads, in one-letter code: E3 ubiquitin ligase TRIM40 (246 aa).

The RING-type zinc finger occupies 12–55; it reads CPICLDPLKEAVSTDCRHLFCRMCLTQHMDKASVSGILSCPVCR. The B box-type zinc-finger motif lies at 64–105; sequence GDNYICHTHQKRVRRFCEASGHLLCEECLQSPEHQSHTELSI. Residues cysteine 69, histidine 72, cysteine 91, and histidine 97 each contribute to the Zn(2+) site. Residues 105-170 adopt a coiled-coil conformation; that stretch reads IENAISHYKE…DQTKEQLKAL (66 aa).

Belongs to the TRIM/RBCC family. As to quaternary structure, interacts with NEDD8.

It catalyses the reaction S-ubiquitinyl-[E2 ubiquitin-conjugating enzyme]-L-cysteine + [acceptor protein]-L-lysine = [E2 ubiquitin-conjugating enzyme]-L-cysteine + N(6)-ubiquitinyl-[acceptor protein]-L-lysine.. In terms of biological role, E3 ubiquitin-protein ligase that plays a role in the limitation of the innate immune response. Mediates inhibition of the RLR signaling pathway by ubiquitinating RIGI and IFIH1 receptors, leading to their proteasomal degradation. Also promotes the neddylation of IKBKG/NEMO, stabilizing NFKBIA, and thereby inhibiting of NF-kappa-B nuclear translocation and activation. The polypeptide is E3 ubiquitin ligase TRIM40 (Trim40) (Mus musculus (Mouse)).